Consider the following 193-residue polypeptide: Adenine phosphoribosyltransferase (193 aa).

The protein belongs to the purine/pyrimidine phosphoribosyltransferase family. Homodimer.

It is found in the cytoplasm. It catalyses the reaction AMP + diphosphate = 5-phospho-alpha-D-ribose 1-diphosphate + adenine. The protein operates within purine metabolism; AMP biosynthesis via salvage pathway; AMP from adenine: step 1/1. In terms of biological role, catalyzes a salvage reaction resulting in the formation of AMP, that is energically less costly than de novo synthesis. In Bifidobacterium longum subsp. infantis (strain ATCC 15697 / DSM 20088 / JCM 1222 / NCTC 11817 / S12), this protein is Adenine phosphoribosyltransferase.